The chain runs to 374 residues: F-box/LRR-repeat protein 8 (374 aa).

The F-box domain maps to 2 to 48 (AEPGEGLPEEVLALIFRHLSLRDRAAAARVCRAWAAAATCSAVWHDT).

As to quaternary structure, directly interacts with SKP1 and CUL1.

Functionally, substrate-recognition component of the SCF (SKP1-CUL1-F-box protein)-type E3 ubiquitin ligase complex. The polypeptide is F-box/LRR-repeat protein 8 (FBXL8) (Homo sapiens (Human)).